A 192-amino-acid chain; its full sequence is dCTP deaminase, dUMP-forming (192 aa).

DCTP contacts are provided by residues 101 to 106, aspartate 119, 127 to 129, glutamine 148, tyrosine 162, and glutamine 174; these read KSSLGR and TLE. Glutamate 129 serves as the catalytic Proton donor/acceptor. The disordered stretch occupies residues 165 to 184; the sequence is GAYGNRYQGQRGPTASRSHL. A compositionally biased stretch (polar residues) spans 171-183; the sequence is YQGQRGPTASRSH.

It belongs to the dCTP deaminase family. As to quaternary structure, homotrimer.

It catalyses the reaction dCTP + 2 H2O = dUMP + NH4(+) + diphosphate. It functions in the pathway pyrimidine metabolism; dUMP biosynthesis; dUMP from dCTP: step 1/1. Its function is as follows. Bifunctional enzyme that catalyzes both the deamination of dCTP to dUTP and the hydrolysis of dUTP to dUMP without releasing the toxic dUTP intermediate. This Kocuria rhizophila (strain ATCC 9341 / DSM 348 / NBRC 103217 / DC2201) protein is dCTP deaminase, dUMP-forming.